The chain runs to 350 residues: Histidinol-phosphate aminotransferase (350 aa).

Lys220 is subject to N6-(pyridoxal phosphate)lysine.

Belongs to the class-II pyridoxal-phosphate-dependent aminotransferase family. Histidinol-phosphate aminotransferase subfamily. As to quaternary structure, homodimer. Pyridoxal 5'-phosphate serves as cofactor.

It catalyses the reaction L-histidinol phosphate + 2-oxoglutarate = 3-(imidazol-4-yl)-2-oxopropyl phosphate + L-glutamate. It functions in the pathway amino-acid biosynthesis; L-histidine biosynthesis; L-histidine from 5-phospho-alpha-D-ribose 1-diphosphate: step 7/9. The protein is Histidinol-phosphate aminotransferase of Macrococcus caseolyticus (strain JCSC5402) (Macrococcoides caseolyticum).